The primary structure comprises 554 residues: Sesquithujene synthase A (554 aa).

Residues Asp308 and Asp312 each coordinate Mg(2+). Substrate-binding residues include Asp308 and Asp312. Residues 308–312 (DDMFD) carry the DDXXD motif motif. Residues 407–411 (SIGAN) are determine the stereoselectivity of the enzyme. Substrate contacts are provided by Arg449 and Asn452. Mg(2+) is bound by residues Asn452, Ser456, and Glu460.

It belongs to the terpene synthase family. As to quaternary structure, monomer. Requires Mg(2+) as cofactor. Mn(2+) serves as cofactor. Highly expressed in the husk. Detected in leaves.

It localises to the cytoplasm. It carries out the reaction (2E,6E)-farnesyl diphosphate = sesquithujene + diphosphate. It catalyses the reaction (2Z,6Z)-farnesyl diphosphate = (1S,5S,6S)-alpha-bergamotene + diphosphate. The enzyme catalyses (2E,6E)-farnesyl diphosphate = (E)-beta-farnesene + diphosphate. The catalysed reaction is (2E,6E)-farnesyl diphosphate = (S)-beta-bisabolene + diphosphate. It carries out the reaction (2Z,6E)-farnesyl diphosphate = (-)-beta-curcumene + diphosphate. It catalyses the reaction (2E,6E)-farnesyl diphosphate = gamma-curcumene + diphosphate. The enzyme catalyses (2E,6E)-farnesyl diphosphate = sesquisabinene B + diphosphate. Its pathway is secondary metabolite biosynthesis; terpenoid biosynthesis. Functionally, sesquiterpene synthase involved in the production after herbivore attack of a blend of volatiles that attracts natural enemies of herbivores. Converts farnesyl diphosphate to sesquithujene, (S)-beta-bisabolene, (Z)-alpha-bergamotene, sesquisabinene B and several minor products. Can also act in vitro as a monoterpene synthase, converting geranyl diphosphate to (S)-(-)-limonene, beta-myrcene and 11 other monoterpenes. The sequence is that of Sesquithujene synthase A from Zea mays (Maize).